Consider the following 63-residue polypeptide: Bucandin (63 aa).

Intrachain disulfides connect C3/C24, C6/C11, C17/C39, C43/C55, and C56/C61.

In terms of tissue distribution, expressed by the venom gland.

The protein resides in the secreted. This toxin is described as enhancing presynaptic acetylcholine release, but neither experimental results, nor references to other sources are available. This is Bucandin from Bungarus candidus (Malayan krait).